The following is a 460-amino-acid chain: Light-independent protochlorophyllide reductase subunit N (460 aa).

Residues Cys-22, Cys-47, and Cys-107 each coordinate [4Fe-4S] cluster.

Belongs to the BchN/ChlN family. Protochlorophyllide reductase is composed of three subunits; ChlL, ChlN and ChlB. Forms a heterotetramer of two ChlB and two ChlN subunits. It depends on [4Fe-4S] cluster as a cofactor.

It catalyses the reaction chlorophyllide a + oxidized 2[4Fe-4S]-[ferredoxin] + 2 ADP + 2 phosphate = protochlorophyllide a + reduced 2[4Fe-4S]-[ferredoxin] + 2 ATP + 2 H2O. The protein operates within porphyrin-containing compound metabolism; chlorophyll biosynthesis (light-independent). Component of the dark-operative protochlorophyllide reductase (DPOR) that uses Mg-ATP and reduced ferredoxin to reduce ring D of protochlorophyllide (Pchlide) to form chlorophyllide a (Chlide). This reaction is light-independent. The NB-protein (ChlN-ChlB) is the catalytic component of the complex. This Thermosynechococcus vestitus (strain NIES-2133 / IAM M-273 / BP-1) protein is Light-independent protochlorophyllide reductase subunit N.